Reading from the N-terminus, the 513-residue chain is MRLAYWMYAGPAHIGTLRVASSFKNVHAIMHAPLGDDYFNVMRSMLERERDFAPVTISIVDRHVLARGSREKVIENILRKDKEERPDLIILTPTCTSSILQEDLQNFANKASRISDSDVIFANIDHYRVNELQAADRTLEQVVKYYLDRSHGQETLDQSVTDVPSANIIGIFTLGFHNQHDCRELRRLLRDLDIKINQVIPEGGSVKDLINLPRAWFNLVPYREVGLMTAMYLENEFGMPYVSTTPMGAVDMAECIQQIHRNVNTLAPISSNKKVDYEPYIDGQTRFVSRAARFSRSIDCHNLTGKETVVFGDATHAASITKISIREMGIRVSCTGTYCKHDAEWFKEQIQDFCDKILITDDHTEVGDMIARVEPSAIFGTQMERHIGKRLDIPCGVISSPVHIQSFPLGYRPFLGYEGTNQIADPVYNSFALGMEDHLLDIFGGHDTKEIMTRSLSTGIGLIWDPESRRELSKIPHFVRNKVERNIEKFAQQKGIVNITTEVIYAAREVLGI.

Asp-36 is a [4Fe-4S] cluster binding site. The Proton donor role is filled by Asp-299. A substrate-binding site is contributed by 434–435 (GM).

The protein belongs to the ChlB/BchB/BchZ family. As to quaternary structure, protochlorophyllide reductase is composed of three subunits; ChlL, ChlN and ChlB. Forms a heterotetramer of two ChlB and two ChlN subunits. The cofactor is [4Fe-4S] cluster.

Its subcellular location is the plastid. The protein resides in the chloroplast. It carries out the reaction chlorophyllide a + oxidized 2[4Fe-4S]-[ferredoxin] + 2 ADP + 2 phosphate = protochlorophyllide a + reduced 2[4Fe-4S]-[ferredoxin] + 2 ATP + 2 H2O. It participates in porphyrin-containing compound metabolism; chlorophyll biosynthesis (light-independent). Its function is as follows. Component of the dark-operative protochlorophyllide reductase (DPOR) that uses Mg-ATP and reduced ferredoxin to reduce ring D of protochlorophyllide (Pchlide) to form chlorophyllide a (Chlide). This reaction is light-independent. The NB-protein (ChlN-ChlB) is the catalytic component of the complex. The protein is Light-independent protochlorophyllide reductase subunit B of Cycas taitungensis (Prince sago).